The chain runs to 253 residues: Phycobilisome rod-core linker polypeptide CpcG4 (253 aa).

One can recognise a PBS-linker domain in the interval 11–191 (SSQNHRVTSF…DFQEKAGTVQ (181 aa)).

It belongs to the phycobilisome linker protein family. As to quaternary structure, part of the phycobilisome, a hemidiscoidal structure that is composed of two distinct substructures: a core complex and a number of rods radiating from the core.

It localises to the cellular thylakoid membrane. Functionally, rod-core linker protein required for attachment of phycocyanin to allophycocyanin in cores of phycobilisomes. In terms of biological role, linker polypeptides determine the state of aggregation and the location of the disk-shaped phycobiliprotein units within the phycobilisome and modulate their spectroscopic properties in order to mediate a directed and optimal energy transfer. This is Phycobilisome rod-core linker polypeptide CpcG4 from Nostoc sp. (strain PCC 7120 / SAG 25.82 / UTEX 2576).